The following is a 240-amino-acid chain: UDP-2,3-diacylglucosamine hydrolase (240 aa).

Residues Asp8, His10, Asp41, Asn79, and His114 each contribute to the Mn(2+) site. Position 79–80 (79–80 (NR)) interacts with substrate. Substrate contacts are provided by Asp122, Ser160, Asn164, Lys167, and His195. Mn(2+) contacts are provided by His195 and His197.

The protein belongs to the LpxH family. Mn(2+) serves as cofactor.

Its subcellular location is the cell inner membrane. It catalyses the reaction UDP-2-N,3-O-bis[(3R)-3-hydroxytetradecanoyl]-alpha-D-glucosamine + H2O = 2-N,3-O-bis[(3R)-3-hydroxytetradecanoyl]-alpha-D-glucosaminyl 1-phosphate + UMP + 2 H(+). It functions in the pathway glycolipid biosynthesis; lipid IV(A) biosynthesis; lipid IV(A) from (3R)-3-hydroxytetradecanoyl-[acyl-carrier-protein] and UDP-N-acetyl-alpha-D-glucosamine: step 4/6. Functionally, hydrolyzes the pyrophosphate bond of UDP-2,3-diacylglucosamine to yield 2,3-diacylglucosamine 1-phosphate (lipid X) and UMP by catalyzing the attack of water at the alpha-P atom. Involved in the biosynthesis of lipid A, a phosphorylated glycolipid that anchors the lipopolysaccharide to the outer membrane of the cell. This chain is UDP-2,3-diacylglucosamine hydrolase, found in Yersinia pseudotuberculosis serotype O:1b (strain IP 31758).